The chain runs to 395 residues: S-adenosylmethionine synthase (395 aa).

Residue H16 participates in ATP binding. Mg(2+) is bound at residue D18. Position 44 (E44) interacts with K(+). 2 residues coordinate L-methionine: E57 and Q100. A flexible loop region spans residues 100-110 (QSPDIAQGVDR). Residues 167 to 169 (DAK), 233 to 234 (RF), D242, 248 to 249 (RK), A265, and K269 contribute to the ATP site. D242 provides a ligand contact to L-methionine. K273 contacts L-methionine.

This sequence belongs to the AdoMet synthase family. As to quaternary structure, homotetramer; dimer of dimers. Requires Mg(2+) as cofactor. It depends on K(+) as a cofactor.

Its subcellular location is the cytoplasm. The enzyme catalyses L-methionine + ATP + H2O = S-adenosyl-L-methionine + phosphate + diphosphate. The protein operates within amino-acid biosynthesis; S-adenosyl-L-methionine biosynthesis; S-adenosyl-L-methionine from L-methionine: step 1/1. In terms of biological role, catalyzes the formation of S-adenosylmethionine (AdoMet) from methionine and ATP. The overall synthetic reaction is composed of two sequential steps, AdoMet formation and the subsequent tripolyphosphate hydrolysis which occurs prior to release of AdoMet from the enzyme. The sequence is that of S-adenosylmethionine synthase from Paraburkholderia phymatum (strain DSM 17167 / CIP 108236 / LMG 21445 / STM815) (Burkholderia phymatum).